The primary structure comprises 114 residues: Protachykinin (114 aa).

Positions 1–19 are cleaved as a signal peptide; that stretch reads MKFLLPSIVIFLVLCQVFG. A propeptide spanning residues 20–55 is cleaved from the precursor; the sequence is EELGPKEDLDYWTGSNQVQDEWLQADPFREIIRRMT. Methionine 67 and methionine 91 each carry methionine amide.

The protein belongs to the tachykinin family. In terms of tissue distribution, expressed in all parts of the brain, with robust expression in the olfactory bulbs and tracts, moderate expression in the hypothalamus and posterior brain, and weak expression in the telencephalon-preoptic region and optic tectum-thalamus. Also expressed in nerve fibers, intestine, testes and pituitary gland. Not expressed in the liver or kidneys.

It localises to the secreted. Tachykinins are active peptides which excite neurons, evoke behavioral responses, are potent vasodilators and secretagogues, and contract (directly or indirectly) many smooth muscles. Its function is as follows. Substance P produces a voltage-dependent inhibition of calcium current in retinal bipolar cells. It can enhance learning and memory, may regulate social approach and feeding behaviors, and can accelerate the functional recovery in postural balance in response to light after unilateral labyrinthectomy. In Carassius auratus (Goldfish), this protein is Protachykinin.